Here is a 97-residue protein sequence, read N- to C-terminus: Large ribosomal subunit protein bL25 (97 aa).

Belongs to the bacterial ribosomal protein bL25 family. In terms of assembly, part of the 50S ribosomal subunit; part of the 5S rRNA/L5/L18/L25 subcomplex. Contacts the 5S rRNA. Binds to the 5S rRNA independently of L5 and L18.

In terms of biological role, this is one of the proteins that binds to the 5S RNA in the ribosome where it forms part of the central protuberance. This is Large ribosomal subunit protein bL25 from Buchnera aphidicola subsp. Baizongia pistaciae (strain Bp).